The following is a 282-amino-acid chain: MSDFSMETLKNLRQQTGVGLTKCKEALEHAKGNLEDAVVYLRKLGLASAGKKEHRETKEGVIAARVDERGAALVEVNVETDFVANNSVFRAFVTSLLSDLLDHKLSDVEALARVMSSQEPSLSVEELKAVTMQTVGENIRISRAFYTPVNSGQSVGIYSHGNGKAVAIVFLSGSENQEALAKDIAMHIVASQPQFLSKESVPQEILEREREVFSSQVAGKPQEVVEKITQGKFKAFFQEACLLEQAFIKDPEVTIQGLIDRAAKASGEPLRVEHFVFWKMGA.

The segment at 80–83 (TDFV) is involved in Mg(2+) ion dislocation from EF-Tu.

This sequence belongs to the EF-Ts family.

It localises to the cytoplasm. In terms of biological role, associates with the EF-Tu.GDP complex and induces the exchange of GDP to GTP. It remains bound to the aminoacyl-tRNA.EF-Tu.GTP complex up to the GTP hydrolysis stage on the ribosome. The sequence is that of Elongation factor Ts from Chlamydia trachomatis serovar L2 (strain ATCC VR-902B / DSM 19102 / 434/Bu).